The chain runs to 1035 residues: Eukaryotic translation initiation factor 3 subunit A (1035 aa).

Residues 92-121 adopt a coiled-coil conformation; that stretch reads LKKFIELAEKKVTEAQAKADEIQSSLESAA. Residues 339-523 form the PCI domain; it reads MTKAASFVLL…GVLTFDTDVF (185 aa). A coiled-coil region spans residues 606 to 910; sequence ERRVIIEKKK…LRAKRAGLSE (305 aa). Composition is skewed to basic and acidic residues over residues 619–632 and 809–901; these read TDAL…EETR and KAAE…EARL. 2 disordered regions span residues 619-649 and 809-1035; these read TDAL…QRLA and KAAE…QQNQ. Low complexity-rich tracts occupy residues 943–953 and 988–1004; these read KEAAGGAAPEA and PPSQ…QTPP.

This sequence belongs to the eIF-3 subunit A family. In terms of assembly, component of the eukaryotic translation initiation factor 3 (eIF-3) complex.

The protein localises to the cytoplasm. In terms of biological role, RNA-binding component of the eukaryotic translation initiation factor 3 (eIF-3) complex, which is involved in protein synthesis of a specialized repertoire of mRNAs and, together with other initiation factors, stimulates binding of mRNA and methionyl-tRNAi to the 40S ribosome. The eIF-3 complex specifically targets and initiates translation of a subset of mRNAs involved in cell proliferation. The polypeptide is Eukaryotic translation initiation factor 3 subunit A (tif32) (Emericella nidulans (strain FGSC A4 / ATCC 38163 / CBS 112.46 / NRRL 194 / M139) (Aspergillus nidulans)).